The chain runs to 149 residues: Large ribosomal subunit protein uL13 (149 aa).

This sequence belongs to the universal ribosomal protein uL13 family. Part of the 50S ribosomal subunit.

This protein is one of the early assembly proteins of the 50S ribosomal subunit, although it is not seen to bind rRNA by itself. It is important during the early stages of 50S assembly. This Saccharolobus solfataricus (strain ATCC 35092 / DSM 1617 / JCM 11322 / P2) (Sulfolobus solfataricus) protein is Large ribosomal subunit protein uL13.